Here is a 174-residue protein sequence, read N- to C-terminus: Large ribosomal subunit protein uL15 (174 aa).

2 disordered regions span residues 1-56 (MKLH…GQMR) and 150-174 (VERR…TPGA). Over residues 21-35 (RGIGSGKGKTGGKGM) the composition is skewed to gly residues.

It belongs to the universal ribosomal protein uL15 family. As to quaternary structure, part of the 50S ribosomal subunit.

Binds to the 23S rRNA. The sequence is that of Large ribosomal subunit protein uL15 from Roseiflexus castenholzii (strain DSM 13941 / HLO8).